We begin with the raw amino-acid sequence, 170 residues long: uncharacterized protein (170 aa).

Residues 35–57 (EEVMPATAPSTDPAVPKDAQEAD) form a disordered region.

This is an uncharacterized protein from Candida tsukubaensis (Yeast).